The chain runs to 239 residues: Proteasome activator complex subunit 2 (239 aa).

Alanine 2 is modified (N-acetylalanine). Serine 10 carries the post-translational modification Phosphoserine. Residues 65–87 (DIPIPDPPPKDDEMETDKQEKKE) form a disordered region. Positions 72-87 (PPKDDEMETDKQEKKE) are enriched in basic and acidic residues.

This sequence belongs to the PA28 family. Heterodimer of PSME1 and PSME2, which forms a hexameric ring.

Implicated in immunoproteasome assembly and required for efficient antigen processing. The PA28 activator complex enhances the generation of class I binding peptides by altering the cleavage pattern of the proteasome. This Mus musculus (Mouse) protein is Proteasome activator complex subunit 2 (Psme2).